Consider the following 35-residue polypeptide: Kappa-theraphotoxin-Tb1a (35 aa).

Intrachain disulfides connect Cys3-Cys18, Cys10-Cys23, and Cys17-Cys30.

This sequence belongs to the neurotoxin 10 (Hwtx-1) family. 59 (Tltx) subfamily. As to quaternary structure, monomer. Expressed by the venom gland.

The protein resides in the secreted. Functionally, blocks Kv4.2/KCND2 voltage-gated potassium channels (IC(50) is 193.0 nM) by shifting the voltage-dependence of channel activation to more depolarized potentials. The toxin is thought to bind to the S3-S4 linker region of the voltage sensor domain. In Theraphosa blondi (Goliath birdeating spider), this protein is Kappa-theraphotoxin-Tb1a.